The chain runs to 136 residues: Transmembrane protein 203 (136 aa).

Positions Met-1–Val-51 are interaction with STING1. A run of 4 helical transmembrane segments spans residues Phe-14–Ala-34, Phe-50–Phe-72, Val-81–Leu-101, and Leu-112–Ala-132. The required for the lysosomal localization of the STING-TMEM203 complex stretch occupies residues Pro-52–Asn-136.

As to quaternary structure, homodimer. Interacts with ATP2A2, ITPR3 and STIM1. Interacts with STING1 (via transmembrane domain). As to expression, increased expression seen in T-lymphocytes from patients with systemic lupus erythematosus (SLE).

The protein resides in the endoplasmic reticulum membrane. Its subcellular location is the endoplasmic reticulum-Golgi intermediate compartment. The protein localises to the lysosome membrane. Involved in the regulation of cellular calcium homeotasis. Required for spermatogenesis. Acts as a regulator of STING-mediated inflammatory signaling in macrophages. Forms a complex with STING, promoting the activity of TBK1 kinase and the transcription factor IRF3, leading to activation of type I interferon expression. The chain is Transmembrane protein 203 (TMEM203) from Homo sapiens (Human).